The chain runs to 1220 residues: DNA-directed RNA polymerase subunit beta (1220 aa).

This sequence belongs to the RNA polymerase beta chain family. As to quaternary structure, the RNAP catalytic core consists of 2 alpha, 1 beta, 1 beta' and 1 omega subunit. When a sigma factor is associated with the core the holoenzyme is formed, which can initiate transcription.

It carries out the reaction RNA(n) + a ribonucleoside 5'-triphosphate = RNA(n+1) + diphosphate. Its function is as follows. DNA-dependent RNA polymerase catalyzes the transcription of DNA into RNA using the four ribonucleoside triphosphates as substrates. The sequence is that of DNA-directed RNA polymerase subunit beta from Mesomycoplasma hyopneumoniae (strain J / ATCC 25934 / NCTC 10110) (Mycoplasma hyopneumoniae).